Reading from the N-terminus, the 228-residue chain is Apoptosis regulator R1 (228 aa).

The segment covering Leu1 to Glu21 has biased composition (basic and acidic residues). A disordered region spans residues Leu1 to Gly29. The BH1 motif lies at Ser120–Ala139. The short motif at Asp171 to Tyr186 is the BH2 element. A helical membrane pass occupies residues Thr207–Ser227.

The protein belongs to the Bcl-2 family.

The protein localises to the membrane. Its function is as follows. Could be the homolog of mammalian Bcl-W. The protein is Apoptosis regulator R1 of Xenopus laevis (African clawed frog).